A 393-amino-acid polypeptide reads, in one-letter code: 4-hydroxyphenylpyruvate dioxygenase (393 aa).

VOC domains are found at residues 17–148 (AFDH…LLER) and 179–339 (FLDH…IFSK). 3 residues coordinate Fe cation: His182, His267, and Glu350.

The protein belongs to the 4HPPD family. Fe cation serves as cofactor.

The catalysed reaction is 3-(4-hydroxyphenyl)pyruvate + O2 = homogentisate + CO2. Its pathway is amino-acid degradation; L-phenylalanine degradation; acetoacetate and fumarate from L-phenylalanine: step 3/6. Functionally, key enzyme in the degradation of tyrosine. The sequence is that of 4-hydroxyphenylpyruvate dioxygenase (hpd-1) from Caenorhabditis briggsae.